The following is an 89-amino-acid chain: Small ribosomal subunit protein bS20 (89 aa).

2 disordered regions span residues 1-25 and 69-89; these read MANI…ASMK and KNAA…IQAS. The span at 7 to 20 shows a compositional bias: basic residues; sequence AIKRAKTSEKRRAH.

It belongs to the bacterial ribosomal protein bS20 family.

Its function is as follows. Binds directly to 16S ribosomal RNA. The polypeptide is Small ribosomal subunit protein bS20 (Geobacillus thermodenitrificans (strain NG80-2)).